Reading from the N-terminus, the 208-residue chain is MKRVALLFLVVICGMGGLGQKLKPKKRSNGEEINFRTKTKDVCTMRISGDEEMKARIECKGQGKSYWCEYTGMPLLCHPFQNNPKMYWNQITMELRKLPHACESTQMLKASMCQKAPVDALMKQVAAGVEPEDGANRDKSSQKTSASVRGAGKSSVKKTGKPAVLPRIKPTQHGQGSENETEAMKLAREHCWESLHEFCSYIIGFFRG.

A signal peptide spans Met-1–Gly-19. 3 disulfide bridges follow: Cys-43–Cys-59, Cys-68–Cys-102, and Cys-77–Cys-113. The interval Glu-130–Thr-181 is disordered. Cys-191 and Cys-199 are joined by a disulfide.

It belongs to the fibroblast growth factor-binding protein family.

The protein resides in the secreted. The protein localises to the extracellular space. This chain is Fibroblast growth factor-binding protein 2 (FGFBP2), found in Gallus gallus (Chicken).